Consider the following 326-residue polypeptide: WRKY transcription factor 8 (326 aa).

Residues 115 to 172 form a disordered region; the sequence is VRVSASPSSSEADHHPGEDSGKIRKKREVRDGGEDDQRSQKVVKTKKKEEKKKEPRVS. 2 stretches are compositionally biased toward basic and acidic residues: residues 125-153 and 161-170; these read EADHHPGEDSGKIRKKREVRDGGEDDQRS and KKEEKKKEPR. A DNA-binding region (WRKY) is located at residues 177-242; it reads TEVDHLEDGY…YESQHNHPIP (66 aa).

This sequence belongs to the WRKY group II-c family. Interacts with VQ9 (via N-terminus). In terms of tissue distribution, highly expressed in roots and at lower levels in rosette leaves, cauline leaves, stems, flowers and siliques.

The protein resides in the nucleus. Functionally, transcription factor. Interacts specifically with the W box (5'-TTGAC[CT]-3'), a frequently occurring stress-responsive cis-acting element. Functions as a positive regulator of salt stress response. Binds the W box of LTI78/RD29A stress-response gene and directly regulates its transcription under salt stress. Functions antagonistically with VQ9 to regulate sodium and potassium homeostasis under salt stress by regulating the expression of downstream SOS (SALT OVERLY SENSITIVE) stress-responsive genes. The DNA-binding activity of WRKY8 is decreased by VQ9. Functions as a negative regulator of basal resistance to the bacterial pathogen P.syringae and as positive regulator of resistance to the fungal pathogen to B.cinerea. Functions as a positive regulator of defense response againt tobamovirus (TMV) by regulating both the abscisic acid and ethylene signaling pathways. Positively regulates ABI4 expression and negatively modulates ACS6 and ERF104 expression by directly binding to the W box consensus motifs within their promoters. This chain is WRKY transcription factor 8 (WRKY8), found in Arabidopsis thaliana (Mouse-ear cress).